Reading from the N-terminus, the 310-residue chain is Olfactory receptor 5P80 (310 aa).

The Extracellular segment spans residues 1–25 (MEPGNYTVVTEVILLGFTEDAIIRA). N-linked (GlcNAc...) asparagine glycosylation occurs at Asn-5. The helical transmembrane segment at 26-46 (ILFIVFLIIYSVTLMGNASII) threads the bilayer. At 47–54 (MLIRRSPQ) the chain is on the cytoplasmic side. The helical transmembrane segment at 55 to 75 (LHTPMYLLLSHLAFVDIGYSS) threads the bilayer. The Extracellular segment spans residues 76–99 (SVTPIMLKGFLRKETFILVSGCVA). A disulfide bond links Cys-97 and Cys-189. The helical transmembrane segment at 100 to 120 (QLCSVVTFGSTECFLLAAMAY) threads the bilayer. At 121–133 (DRYVAICSPLLYA) the chain is on the cytoplasmic side. The helical transmembrane segment at 134–154 (TQMSSTVCILLVGASYLGGCV) threads the bilayer. Residues 155–196 (NAWTFTGCLLNLSFCRPNKVNHFFCDYSPLLKISCSHDFSSE) are Extracellular-facing. The N-linked (GlcNAc...) asparagine glycan is linked to Asn-165. The helical transmembrane segment at 197–217 (VIPAISSGSIIVVTVFIIALS) threads the bilayer. The Cytoplasmic segment spans residues 218–237 (YVYILVSILKMRSTEGRQKA). Residues 238–258 (FSTCTSHLTAVTLFYGTITFI) traverse the membrane as a helical segment. The Extracellular segment spans residues 259 to 271 (YVMPKSSYSTDQN). Residues 272-292 (KVVSVFYTVVIPMLNPIIYSL) traverse the membrane as a helical segment. Residues 293 to 310 (RNKDVKEAMKKLMANTHH) lie on the Cytoplasmic side of the membrane.

It belongs to the G-protein coupled receptor 1 family.

Its subcellular location is the cell membrane. In terms of biological role, potential odorant receptor. The protein is Olfactory receptor 5P80 of Mus musculus (Mouse).